The sequence spans 156 residues: Small ribosomal subunit protein uS7 (156 aa).

It belongs to the universal ribosomal protein uS7 family. Part of the 30S ribosomal subunit. Contacts proteins S9 and S11.

Its function is as follows. One of the primary rRNA binding proteins, it binds directly to 16S rRNA where it nucleates assembly of the head domain of the 30S subunit. Is located at the subunit interface close to the decoding center, probably blocks exit of the E-site tRNA. This is Small ribosomal subunit protein uS7 from Lachnospira eligens (strain ATCC 27750 / DSM 3376 / VPI C15-48 / C15-B4) (Eubacterium eligens).